Reading from the N-terminus, the 159-residue chain is Putative 2'-deoxynucleoside 5'-phosphate N-hydrolase 1 (159 aa).

Substrate contacts are provided by residues 25–31 (FLSGSIR), Tyr-40, His-58, Glu-104, and 126–128 (SAM).

It belongs to the 2'-deoxynucleoside 5'-phosphate N-hydrolase 1 family. Monomer and homodimer.

The catalysed reaction is a pyrimidine 2'-deoxyribonucleoside 5'-phosphate + H2O = a pyrimidine nucleobase + 2-deoxy-D-ribose 5-phosphate. It carries out the reaction a purine 2'-deoxyribonucleoside 5'-phosphate + H2O = a purine nucleobase + 2-deoxy-D-ribose 5-phosphate. Functionally, catalyzes the cleavage of the N-glycosidic bond of deoxyribonucleoside 5'-monophosphates to yield deoxyribose 5-phosphate and a purine or pyrimidine base. The polypeptide is Putative 2'-deoxynucleoside 5'-phosphate N-hydrolase 1 (Methanosarcina barkeri (strain Fusaro / DSM 804)).